A 201-amino-acid polypeptide reads, in one-letter code: ATP-dependent Clp protease proteolytic subunit (201 aa).

Catalysis depends on S105, which acts as the Nucleophile. H130 is an active-site residue.

The protein belongs to the peptidase S14 family. Fourteen ClpP subunits assemble into 2 heptameric rings which stack back to back to give a disk-like structure with a central cavity, resembling the structure of eukaryotic proteasomes.

The protein resides in the cytoplasm. The catalysed reaction is Hydrolysis of proteins to small peptides in the presence of ATP and magnesium. alpha-casein is the usual test substrate. In the absence of ATP, only oligopeptides shorter than five residues are hydrolyzed (such as succinyl-Leu-Tyr-|-NHMec, and Leu-Tyr-Leu-|-Tyr-Trp, in which cleavage of the -Tyr-|-Leu- and -Tyr-|-Trp bonds also occurs).. Functionally, cleaves peptides in various proteins in a process that requires ATP hydrolysis. Has a chymotrypsin-like activity. Plays a major role in the degradation of misfolded proteins. This is ATP-dependent Clp protease proteolytic subunit from Aquifex aeolicus (strain VF5).